Reading from the N-terminus, the 405-residue chain is Peroxisomal membrane protein PEX13 (405 aa).

Residues 1 to 11 (MASQPPPPPKP) show a composition bias toward pro residues. Residues 1-71 (MASQPPPPPK…SQQTGSNNVN (71 aa)) form a disordered region. Over 1–136 (MASQPPPPPK…SSRGAFQSIE (136 aa)) the chain is Peroxisomal matrix. Residues 61–71 (PSQQTGSNNVN) show a composition bias toward polar residues. A helical transmembrane segment spans residues 137-157 (SIVHAFASVSMMMDATFSAVY). Residues 147-235 (MMMDATFSAV…EDQATNSAKS (89 aa)) form a targeting to peroxisomes region. Over 158-176 (NSFRAVLDVANHFSRLKIH) the chain is Cytoplasmic. Residues 177–194 (FTKVFSAFALVRTIRYLY) form a helical membrane-spanning segment. The interaction with PEX19 stretch occupies residues 177–198 (FTKVFSAFALVRTIRYLYRRLQ). Residues 195 to 235 (RRLQWMMGLRRGSENEDLWAESEGTVACLSAEDQATNSAKS) lie on the Peroxisomal matrix side of the membrane. The helical transmembrane segment at 236-256 (WPIFLFFAVILGGPYLIWKLL) threads the bilayer. The Cytoplasmic portion of the chain corresponds to 257 to 405 (STHNDEVTDN…TGKNGDKQDL (149 aa)). The region spanning 274 to 338 (DDHVVARAEY…PANYVKILGK (65 aa)) is the SH3 domain. Position 356 is a phosphoserine (S356).

Belongs to the peroxin-13 family. In terms of assembly, interacts (via SH3 domain) with PEX14 (via SH3-binding motif); forming the PEX13-PEX14 docking complex. Interacts with PEX19.

It is found in the peroxisome membrane. Its function is as follows. Component of the PEX13-PEX14 docking complex, a translocon channel that specifically mediates the import of peroxisomal cargo proteins bound to PEX5 receptor. The PEX13-PEX14 docking complex forms a large import pore which can be opened to a diameter of about 9 nm. Mechanistically, PEX5 receptor along with cargo proteins associates with the PEX14 subunit of the PEX13-PEX14 docking complex in the cytosol, leading to the insertion of the receptor into the organelle membrane with the concomitant translocation of the cargo into the peroxisome matrix. Involved in the import of PTS1- and PTS2-type containing proteins. In Mus musculus (Mouse), this protein is Peroxisomal membrane protein PEX13.